The following is a 150-amino-acid chain: D-aminoacyl-tRNA deacylase (150 aa).

The short motif at 138–139 is the Gly-cisPro motif, important for rejection of L-amino acids element; sequence GP.

This sequence belongs to the DTD family. In terms of assembly, homodimer.

The protein resides in the cytoplasm. It catalyses the reaction glycyl-tRNA(Ala) + H2O = tRNA(Ala) + glycine + H(+). The catalysed reaction is a D-aminoacyl-tRNA + H2O = a tRNA + a D-alpha-amino acid + H(+). An aminoacyl-tRNA editing enzyme that deacylates mischarged D-aminoacyl-tRNAs. Also deacylates mischarged glycyl-tRNA(Ala), protecting cells against glycine mischarging by AlaRS. Acts via tRNA-based rather than protein-based catalysis; rejects L-amino acids rather than detecting D-amino acids in the active site. By recycling D-aminoacyl-tRNA to D-amino acids and free tRNA molecules, this enzyme counteracts the toxicity associated with the formation of D-aminoacyl-tRNA entities in vivo and helps enforce protein L-homochirality. The sequence is that of D-aminoacyl-tRNA deacylase from Flavobacterium psychrophilum (strain ATCC 49511 / DSM 21280 / CIP 103535 / JIP02/86).